The sequence spans 197 residues: Probable GTP-binding protein EngB (197 aa).

Positions 22–195 (KRIEIAFVGR…LKVLESVIDF (174 aa)) constitute an EngB-type G domain. Residues 30-37 (GRSNVGKS), 57-61 (GKTRL), 75-78 (DLPG), 142-145 (TKVD), and 174-176 (FSS) each bind GTP. Residues Ser37 and Thr59 each contribute to the Mg(2+) site.

The protein belongs to the TRAFAC class TrmE-Era-EngA-EngB-Septin-like GTPase superfamily. EngB GTPase family. Requires Mg(2+) as cofactor.

Functionally, necessary for normal cell division and for the maintenance of normal septation. The sequence is that of Probable GTP-binding protein EngB from Clostridium kluyveri (strain ATCC 8527 / DSM 555 / NBRC 12016 / NCIMB 10680 / K1).